The following is an 84-amino-acid chain: Small ribosomal subunit protein uS17 (84 aa).

The protein belongs to the universal ribosomal protein uS17 family. As to quaternary structure, part of the 30S ribosomal subunit.

Functionally, one of the primary rRNA binding proteins, it binds specifically to the 5'-end of 16S ribosomal RNA. The chain is Small ribosomal subunit protein uS17 from Vibrio atlanticus (strain LGP32) (Vibrio splendidus (strain Mel32)).